Consider the following 300-residue polypeptide: tRNA dimethylallyltransferase (300 aa).

ATP is bound at residue Gly11–Ser18. Thr13–Ser18 is a binding site for substrate. The interval Asp35 to Gln38 is interaction with substrate tRNA.

It belongs to the IPP transferase family. Monomer. Requires Mg(2+) as cofactor.

The catalysed reaction is adenosine(37) in tRNA + dimethylallyl diphosphate = N(6)-dimethylallyladenosine(37) in tRNA + diphosphate. Its function is as follows. Catalyzes the transfer of a dimethylallyl group onto the adenine at position 37 in tRNAs that read codons beginning with uridine, leading to the formation of N6-(dimethylallyl)adenosine (i(6)A). The chain is tRNA dimethylallyltransferase from Borreliella afzelii (strain PKo) (Borrelia afzelii).